The sequence spans 268 residues: Bidirectional sugar transporter N3 (268 aa).

Over 1 to 7 (MAISHNT) the chain is Extracellular. A helical transmembrane segment spans residues 8 to 28 (LAFTFGMLGNVISFLVFLAPI). The 87-residue stretch at 10–96 (FTFGMLGNVI…ILYIIYAPRD (87 aa)) folds into the MtN3/slv 1 domain. At 29-42 (STFYRIYKKKSTEG) the chain is on the cytoplasmic side. A helical membrane pass occupies residues 43–63 (FQSLPYLVALFSSMLWLYYAL). The Extracellular segment spans residues 64–70 (LKKDAFL). A helical membrane pass occupies residues 71–91 (LITINSFGCVVETIYIILYII). Residues 92–103 (YAPRDARNLTFK) are Cytoplasmic-facing. A helical membrane pass occupies residues 104–124 (LLSAMNVGSFALILIVTNYAV). At 125–131 (HGPLRVQ) the chain is on the extracellular side. One can recognise a MtN3/slv 2 domain in the interval 131–214 (QVLGWVCVSL…QMLLYAIYRN (84 aa)). A helical membrane pass occupies residues 132-152 (VLGWVCVSLSVSVFAAPLSIV). At 153 to 165 (AQVVRTKSVEFMP) the chain is on the cytoplasmic side. The helical transmembrane segment at 166–186 (FNLSFTLTLSATMWFGYGFFL) threads the bilayer. Topologically, residues 187 to 190 (KDIC) are extracellular. Residues 191-211 (IXLPNVLGXVLGLLQMLLYAI) traverse the membrane as a helical segment. Residues 212–268 (YRNGGEKAMKKEKKAPIEPPKSIVIETQLEKIEQEKKNKDDDNEEKDKSEEPIGCGV) lie on the Cytoplasmic side of the membrane. The stretch at 234–262 (IVIETQLEKIEQEKKNKDDDNEEKDKSEE) forms a coiled coil. The span at 243–262 (IEQEKKNKDDDNEEKDKSEE) shows a compositional bias: basic and acidic residues. Residues 243 to 268 (IEQEKKNKDDDNEEKDKSEEPIGCGV) are disordered.

This sequence belongs to the SWEET sugar transporter family. In terms of assembly, forms homooligomers and/or heterooligomers.

The protein resides in the cell membrane. Its function is as follows. Mediates both low-affinity uptake and efflux of sugar across the plasma membrane. In Medicago truncatula (Barrel medic), this protein is Bidirectional sugar transporter N3 (N3).